A 383-amino-acid chain; its full sequence is MVDDGPKGRQQLKLLLVAARHQLSGQDLRGLVHYLEREDLGFEVTLQVADPTQQPELLELHRLVVTPALIKLQPSPKQVFAGSNILQQLKGWVPRWKQDGVVSGLGLSLRPTELDGSRTQKELQLEDQLLVLRQENETLIDRIHAQERLLRMVAHELRTPLTAAALALQSQRLGQIDMDRFQDVVTRRLEEMEALSKDLLEVGTTRWETLFNPQRLDLASVSAEVILELEKLWLGRNVEIRTDIPSDLPKVFADQRRMRQVLLNLLENALKYTGNGGHIALSMLHRTNQWVEVSVCDSGPGIPNEEQQRIFLDRVRLPQTSDRTTGFGVGLSVCRRIVEVHGGRIWVVSEPEEGACFTFTVPIWQGQGQEWGQAVLTEGQADP.

The region spanning 152–365 (MVAHELRTPL…CFTFTVPIWQ (214 aa)) is the Histidine kinase domain. His-155 bears the Phosphohistidine; by autocatalysis mark.

As to quaternary structure, homooligomerizes. Interacts with KaiC. Participates in the KaiABC clock complex, whose core is composed of a KaiC homohexamer, 6 KaiB and up to 6 KaiA dimers. SasA and KaiB(fs) compete to bind to KaiC.

The catalysed reaction is ATP + protein L-histidine = ADP + protein N-phospho-L-histidine.. In terms of biological role, member of the two-component regulatory system SasA/RpaA involved in genome-wide circadian gene expression. One of several clock output pathways. Participates in the Kai clock protein complex, the main circadian regulator in cyanobacteria, via its interaction with KaiC. KaiC enhances the autophosphorylation activity of SasA, which then transfers its phosphate group to RpaA to activate it. In addition to its output function, recruits fold-shifted KaiB (KaiB(fs)) to KaiC to cooperatively form the KaiB(6):KaiC(6) complex (independent of SasA kinase activity). Required for robustness of the circadian rhythm of gene expression and is involved in clock output, also required for adaptation to light/dark cycles. This Synechococcus sp. (strain CC9902) protein is Adaptive-response sensory kinase SasA.